The chain runs to 397 residues: Elongation factor Tu (397 aa).

In terms of domain architecture, tr-type G spans 10 to 206 (KPHVNIGTIG…AVDTSIPQPE (197 aa)). A G1 region spans residues 19-26 (GHIDHGKT). 19-26 (GHIDHGKT) contacts GTP. Thr-26 serves as a coordination point for Mg(2+). A G2 region spans residues 62 to 66 (GITIS). Residues 83-86 (DCPG) are G3. GTP contacts are provided by residues 83-87 (DCPGH) and 138-141 (NKSD). The segment at 138-141 (NKSD) is G4. Residues 176 to 178 (SAL) are G5.

The protein belongs to the TRAFAC class translation factor GTPase superfamily. Classic translation factor GTPase family. EF-Tu/EF-1A subfamily. In terms of assembly, monomer.

It localises to the cytoplasm. The catalysed reaction is GTP + H2O = GDP + phosphate + H(+). In terms of biological role, GTP hydrolase that promotes the GTP-dependent binding of aminoacyl-tRNA to the A-site of ribosomes during protein biosynthesis. The sequence is that of Elongation factor Tu from Salinispora arenicola (strain CNS-205).